Consider the following 440-residue polypeptide: Actin-like protein 7A (440 aa).

Positions 1–27 are disordered; that stretch reads MSLDAVWAPQTANIGDGPAKKASDQTS. The interval 36–56 is required for interaction with TES; the sequence is ASLRDGPAKRAVWVRRDNAEK.

This sequence belongs to the actin family. Interacts (via N-terminus) with TES (via LIM domain 2). Heterodimer with TES; the heterodimer interacts with ENAH to form a heterotrimer. Interacts with ACTL9. Interacts with CYLC1; the interaction may be relevant for proper acrosome attachment to the nuclear envelope. As to expression, detected in testis. Detected at the acrosome of round spermatids (at protein level).

The protein localises to the cytoplasm. Its subcellular location is the cytoskeleton. It localises to the golgi apparatus. The protein resides in the nucleus. Essential for normal spermatogenesis and male fertility. Required for normal sperm head morphology, acroplaxome formation, acrosome attachment, and acrosome granule stability. May anchor and stabilize acrosomal adherence to the acroplaxome at least in part by facilitating the presence of F-actin in the subacrosomal space. May play an important role in formation and fusion of Golgi-derived vesicles during acrosome biogenesis. This Rattus norvegicus (Rat) protein is Actin-like protein 7A (Actl7a).